The sequence spans 170 residues: ATP synthase subunit b (170 aa).

A helical membrane pass occupies residues 5 to 25 (YFIPCLLLPTMMLASGGGGET).

This sequence belongs to the ATPase B chain family. As to quaternary structure, F-type ATPases have 2 components, F(1) - the catalytic core - and F(0) - the membrane proton channel. F(1) has five subunits: alpha(3), beta(3), gamma(1), delta(1), epsilon(1). F(0) has three main subunits: a(1), b(2) and c(10-14). The alpha and beta chains form an alternating ring which encloses part of the gamma chain. F(1) is attached to F(0) by a central stalk formed by the gamma and epsilon chains, while a peripheral stalk is formed by the delta and b chains.

The protein resides in the cell inner membrane. Functionally, f(1)F(0) ATP synthase produces ATP from ADP in the presence of a proton or sodium gradient. F-type ATPases consist of two structural domains, F(1) containing the extramembraneous catalytic core and F(0) containing the membrane proton channel, linked together by a central stalk and a peripheral stalk. During catalysis, ATP synthesis in the catalytic domain of F(1) is coupled via a rotary mechanism of the central stalk subunits to proton translocation. Component of the F(0) channel, it forms part of the peripheral stalk, linking F(1) to F(0). The polypeptide is ATP synthase subunit b (Wolinella succinogenes (strain ATCC 29543 / DSM 1740 / CCUG 13145 / JCM 31913 / LMG 7466 / NCTC 11488 / FDC 602W) (Vibrio succinogenes)).